Reading from the N-terminus, the 371-residue chain is Uroporphyrinogen decarboxylase (371 aa).

A compositionally biased stretch (polar residues) spans 1–14; the sequence is MARWATMSTETTGT. Positions 1–30 are disordered; that stretch reads MARWATMSTETTGTGARDEGPRPGDPADSP. Residues 49–53, aspartate 98, tyrosine 173, serine 228, and histidine 342 contribute to the substrate site; that span reads RQAGR.

This sequence belongs to the uroporphyrinogen decarboxylase family. In terms of assembly, homodimer.

The protein localises to the cytoplasm. It carries out the reaction uroporphyrinogen III + 4 H(+) = coproporphyrinogen III + 4 CO2. It participates in porphyrin-containing compound metabolism; protoporphyrin-IX biosynthesis; coproporphyrinogen-III from 5-aminolevulinate: step 4/4. Its function is as follows. Catalyzes the decarboxylation of four acetate groups of uroporphyrinogen-III to yield coproporphyrinogen-III. The sequence is that of Uroporphyrinogen decarboxylase from Salinispora tropica (strain ATCC BAA-916 / DSM 44818 / JCM 13857 / NBRC 105044 / CNB-440).